Reading from the N-terminus, the 315-residue chain is Transmembrane protein 231 (315 aa).

Residues 23 to 43 form a helical membrane-spanning segment; that stretch reads AALFLLLTTALTYIPPLLVAF. N-linked (GlcNAc...) asparagine glycans are attached at residues N194, N199, and N221. The chain crosses the membrane as a helical span at residues 262–282; the sequence is FWEMIKFAWIQYVSILLIFLW.

The protein belongs to the TMEM231 family. In terms of assembly, part of the tectonic-like complex (also named B9 complex). Interacts with TMEM107.

It is found in the cell projection. Its subcellular location is the cilium membrane. Transmembrane component of the tectonic-like complex, a complex localized at the transition zone of primary cilia and acting as a barrier that prevents diffusion of transmembrane proteins between the cilia and plasma membranes. Required for ciliogenesis and sonic hedgehog/SHH signaling. In Mus musculus (Mouse), this protein is Transmembrane protein 231 (Tmem231).